The primary structure comprises 387 residues: 3-ketoacyl-CoA thiolase (387 aa).

Cys-91 serves as the catalytic Acyl-thioester intermediate. Catalysis depends on proton acceptor residues His-343 and Cys-373.

This sequence belongs to the thiolase-like superfamily. Thiolase family. Heterotetramer of two alpha chains (FadB) and two beta chains (FadA).

The protein localises to the cytoplasm. It carries out the reaction an acyl-CoA + acetyl-CoA = a 3-oxoacyl-CoA + CoA. It participates in lipid metabolism; fatty acid beta-oxidation. In terms of biological role, catalyzes the final step of fatty acid oxidation in which acetyl-CoA is released and the CoA ester of a fatty acid two carbons shorter is formed. This Shewanella frigidimarina (strain NCIMB 400) protein is 3-ketoacyl-CoA thiolase.